The following is an 829-amino-acid chain: Periplasmic nitrate reductase (829 aa).

The segment at residues 1-27 (MNRRDFMKANAVIAAASAAGLALPAGA) is a signal peptide (tat-type signal). One can recognise a 4Fe-4S Mo/W bis-MGD-type domain in the interval 39-95 (LEWNKAPCRFCGTGCSVMVATREGKVVATHGDANSEVNRGLSCIKGYFLSKIMYGRD). [4Fe-4S] cluster contacts are provided by Cys-46, Cys-49, Cys-53, and Cys-81. Mo-bis(molybdopterin guanine dinucleotide) contacts are provided by residues Lys-83, Gln-150, Asn-175, Cys-179, 212-219 (WGSNMAEM), 243-247 (STFEH), 262-264 (QTD), Met-373, Gln-377, Asn-483, 509-510 (SD), Lys-532, Asp-559, and 719-728 (TGRVLEHWHS). Residue Trp-795 participates in substrate binding. Positions 803 and 820 each coordinate Mo-bis(molybdopterin guanine dinucleotide).

It belongs to the prokaryotic molybdopterin-containing oxidoreductase family. NasA/NapA/NarB subfamily. In terms of assembly, component of the periplasmic nitrate reductase NapAB complex composed of NapA and NapB. [4Fe-4S] cluster serves as cofactor. Requires Mo-bis(molybdopterin guanine dinucleotide) as cofactor. Post-translationally, predicted to be exported by the Tat system. The position of the signal peptide cleavage has not been experimentally proven.

The protein localises to the periplasm. It carries out the reaction 2 Fe(II)-[cytochrome] + nitrate + 2 H(+) = 2 Fe(III)-[cytochrome] + nitrite + H2O. In terms of biological role, catalytic subunit of the periplasmic nitrate reductase complex NapAB. Receives electrons from NapB and catalyzes the reduction of nitrate to nitrite. This chain is Periplasmic nitrate reductase, found in Shewanella denitrificans (strain OS217 / ATCC BAA-1090 / DSM 15013).